A 110-amino-acid chain; its full sequence is Transmembrane protein 233 (110 aa).

The disordered stretch occupies residues 1–32 (MSQYASRSDSKGALDSSSPEAYTEDDKTEEDI). Residues 1–42 (MSQYASRSDSKGALDSSSPEAYTEDDKTEEDIPAPSNYLWLT) lie on the Cytoplasmic side of the membrane. Acidic residues predominate over residues 22–32 (YTEDDKTEEDI). The helical intramembrane region spans 43-63 (IISCFCPAYPVNIVALVFSIM). Residues 64–85 (SLNSYNDGDYEGARRLGRNAKW) lie on the Cytoplasmic side of the membrane. Residues 86–106 (VAIASIIIGLVIIGVSCAVHF) form a helical membrane-spanning segment. Over 107–110 (SRNP) the chain is Extracellular.

Belongs to the CD225/Dispanin family. As to quaternary structure, interacts with the giant stinging tree toxin ExTxA (P0DQP3). Interacts with Nav1.7/SCN9A. Interacts with Nav1.1/SCN1A, Nav1.2/SCN2A, Nav1.3/SCN3A, Nav1.4/SCN4A, Nav1.5/SCN5A, and Nav1.6/SCN8A. Probably expressed in nociceptive neurons. Detected in dorsal root ganglion neurons.

The protein localises to the membrane. Its function is as follows. Probable accessory protein of voltage-gated sodium channels. The protein is Transmembrane protein 233 of Mus musculus (Mouse).